The chain runs to 159 residues: Protein C2 (159 aa).

The Nuclear localization signal motif lies at 43–60; it reads KKRPPKLTWAPKKKRRKA. A zinc finger spans residues 65 to 81; that stretch reads CGCSYYGGIDCEDGFTH. The interval 102 to 139 is disordered; that stretch reads PNLLPPPEHNNNGDGEQNNNITNQSQPQPAESVGSPDL. Residues 110-124 are compositionally biased toward low complexity; sequence HNNNGDGEQNNNITN.

This sequence belongs to the geminiviridae transcriptional activator protein family. In terms of assembly, monomer. Suppress local silencing by interacting with and inactivating host adenosine kinase 2 (ADK2) in the cytoplasm. Interacts with and inhibits host SNF1 kinase.

It localises to the host cytoplasm. Its function is as follows. Acts as a suppressor of RNA-mediated gene silencing, also known as post-transcriptional gene silencing (PTGS), a mechanism of plant viral defense that limits the accumulation of viral RNAs. Suppresses the host RNA silencing by inhibiting adenosine kinase 2 (ADK2), a kinase involved in a general methylation pathway. Also suppresses the host basal defense by interacting with and inhibiting SNF1 kinase, a key regulator of cell metabolism implicated in innate antiviral defense. Determines pathogenicity. The polypeptide is Protein C2 (Tomato pseudo-curly top virus (TPCTV)).